The following is a 1597-amino-acid chain: Mitogen-activated protein kinase kinase kinase 4 (1597 aa).

Disordered regions lie at residues 1 to 128 and 424 to 465; these read MRDA…VETV and SPRP…PRVP. Residues 59–69 are compositionally biased toward acidic residues; it reads SDPEDFSDETN. Ser-77 carries the post-translational modification Phosphoserine. The span at 84 to 94 shows a compositional bias: basic residues; it reads QMKRLSAKHQR. Ser-424 is modified (phosphoserine). Thr-440 bears the Phosphothreonine mark. Ser-449 is subject to Phosphoserine. Residues 449-458 are compositionally biased toward acidic residues; the sequence is SGTEESDEEP. Thr-451 carries the phosphothreonine modification. Phosphoserine is present on residues Ser-454 and Ser-492. Disordered regions lie at residues 1137 to 1157, 1190 to 1220, and 1233 to 1263; these read RPVK…IIPT, AAGR…SVPE, and FRSL…TRRS. Polar residues predominate over residues 1210-1219; sequence APDTRGSSVP. A phosphoserine mark is found at Ser-1241 and Ser-1263. Over residues 1241-1250 the composition is skewed to basic and acidic residues; sequence SPTEERDEPA. The Protein kinase domain maps to 1332-1590; the sequence is WQRGNKIGEG…ASQLLDHAFV (259 aa). ATP contacts are provided by residues 1338-1346 and Lys-1361; that span reads IGEGQYGKV. Asp-1452 serves as the catalytic Proton acceptor.

This sequence belongs to the protein kinase superfamily. STE Ser/Thr protein kinase family. MAP kinase kinase kinase subfamily. Monomer and homodimer. Homodimerization enhances kinase activity. Interacts with CDC42. Interacts with TRAF4; this promotes homodimerization. Binds both upstream activators and downstream substrates in multimolecular complexes. Interacts with AXIN1 and DIXDC1; interaction with DIXDC1 prevents interaction with AXIN1. Interacts with GADD45 and MAP2K6. Interacts with ZFP36; this interaction enhances the association with SH3KBP1/CIN85. Interacts with SH3KBP1; this interaction enhances the association with ZFP36. Mg(2+) is required as a cofactor. As to expression, widely expressed. High expression was found in skeletal muscle, kidney, testis followed by heart brain and lung. Low expression was found in spleen.

The protein resides in the cytoplasm. It is found in the perinuclear region. The catalysed reaction is L-seryl-[protein] + ATP = O-phospho-L-seryl-[protein] + ADP + H(+). It catalyses the reaction L-threonyl-[protein] + ATP = O-phospho-L-threonyl-[protein] + ADP + H(+). N-terminal autoinhibitory domain interacts with the C-terminal kinase domain, inhibiting kinase activity, and preventing interaction with its substrate, MAP2K6. The GADD45 proteins activate the kinase by binding to the N-terminal domain. Activated by phosphorylation on Thr-1494. Its function is as follows. Component of a protein kinase signal transduction cascade. Activates the CSBP2, P38 and JNK MAPK pathways, but not the ERK pathway. Specifically phosphorylates and activates MAP2K4 and MAP2K6. This Mus musculus (Mouse) protein is Mitogen-activated protein kinase kinase kinase 4 (Map3k4).